A 257-amino-acid polypeptide reads, in one-letter code: uncharacterized protein (257 aa).

Positions 1-22 are cleaved as a signal peptide; sequence MGYLKRFALYISVMILIFAIAG. A lipid anchor (N-palmitoyl cysteine) is attached at cysteine 23. Residue cysteine 23 is the site of S-diacylglycerol cysteine attachment.

It belongs to the staphylococcal tandem lipoprotein family.

It localises to the cell membrane. This is an uncharacterized protein from Staphylococcus aureus (strain USA300).